Consider the following 182-residue polypeptide: MNKLSTKLVVAIGIGSALYGILGLWGFTIAPNTFIKPALAILTVFGALFGPVAGLLIGLIGHTVTDTIAGWGIWWGWVISSGIIGFTMGFIQKRVGFSVKNGTYNKGDISYLAITGLIGIVIAIIFAGAFDIIVMGEPFDKIVIQVLGATIADVIVFLVLGLPITIGLAKSNKKHTHLKIEK.

A run of 5 helical transmembrane segments spans residues 9 to 29, 40 to 60, 71 to 91, 114 to 134, and 142 to 162; these read VVAI…GFTI, AILT…IGLI, WGIW…MGFI, ITGL…DIIV, and IVIQ…VLGL.

Belongs to the UPF0397 family.

It is found in the cell membrane. This chain is UPF0397 protein BCAH820_2657, found in Bacillus cereus (strain AH820).